The following is a 225-amino-acid chain: Claudin-17 (225 aa).

At 1-7 (MAFYPLQ) the chain is on the cytoplasmic side. The chain crosses the membrane as a helical span at residues 8-28 (IAGLVLGFLGMVGTLATTLLP). The Extracellular portion of the chain corresponds to 29–81 (QWRVSAFIGSNIIVFERIWEGLWMNCVRQAKARLQCKFYSSMLALSPALEAAR). The chain crosses the membrane as a helical span at residues 82–102 (ALMCVAVALSLIALIIGICGM). Residues 103 to 124 (KKIQCTGSNERAKAYLLGTSGV) are Cytoplasmic-facing. The chain crosses the membrane as a helical span at residues 125-145 (LFILTGIFVLIPVCWTANIII). The Extracellular portion of the chain corresponds to 146–164 (RDFYNPAVHVGQKRELGAA). A helical membrane pass occupies residues 165 to 185 (LFLGWASVAVLFIAGGLLCGF). Residues 186–225 (CCCNRKKQRDGYPAPRPSMPRTDERRRNMTRQSETPTSYV) lie on the Cytoplasmic side of the membrane. Residues 194–225 (RDGYPAPRPSMPRTDERRRNMTRQSETPTSYV) form a disordered region. The span at 215-225 (TRQSETPTSYV) shows a compositional bias: polar residues.

Belongs to the claudin family. In terms of assembly, does not form homotypic polymeric strands and it is not sufficient to form tight junctions by its own. Interacts with OCLN.

Its subcellular location is the cell junction. The protein resides in the tight junction. The protein localises to the cell membrane. The enzyme catalyses chloride(in) = chloride(out). It catalyses the reaction hydrogencarbonate(in) = hydrogencarbonate(out). The catalysed reaction is bromide(in) = bromide(out). It carries out the reaction iodide(out) = iodide(in). The enzyme catalyses fluoride(in) = fluoride(out). It catalyses the reaction nitrate(in) = nitrate(out). The catalysed reaction is thiocyanate(in) = thiocyanate(out). Functionally, channel-forming tight junction protein with selectivity for anions, including chloride and hydrogencarbonate, and for solutes smaller than 9 Angstrom in diameter. In the kidney proximal tubule, may be involved in quantitative reabsorption of filtered anions. Does not affect water permeability. This chain is Claudin-17 (CLDN17), found in Sus scrofa (Pig).